Here is a 132-residue protein sequence, read N- to C-terminus: D-ribose pyranase (132 aa).

Histidine 20 acts as the Proton donor in catalysis. Substrate-binding positions include aspartate 28, histidine 98, and 121–123 (YSN).

This sequence belongs to the RbsD / FucU family. RbsD subfamily. Homodecamer.

The protein resides in the cytoplasm. It carries out the reaction beta-D-ribopyranose = beta-D-ribofuranose. Its pathway is carbohydrate metabolism; D-ribose degradation; D-ribose 5-phosphate from beta-D-ribopyranose: step 1/2. Catalyzes the interconversion of beta-pyran and beta-furan forms of D-ribose. This is D-ribose pyranase from Kosmotoga olearia (strain ATCC BAA-1733 / DSM 21960 / TBF 19.5.1).